A 146-amino-acid polypeptide reads, in one-letter code: Large ribosomal subunit protein bL19 (146 aa).

The protein belongs to the bacterial ribosomal protein bL19 family.

Its function is as follows. This protein is located at the 30S-50S ribosomal subunit interface and may play a role in the structure and function of the aminoacyl-tRNA binding site. This chain is Large ribosomal subunit protein bL19, found in Bartonella henselae (strain ATCC 49882 / DSM 28221 / CCUG 30454 / Houston 1) (Rochalimaea henselae).